The chain runs to 286 residues: Bifunctional protein FolD (286 aa).

Residues G166–S168 and I232 each bind NADP(+).

The protein belongs to the tetrahydrofolate dehydrogenase/cyclohydrolase family. As to quaternary structure, homodimer.

The enzyme catalyses (6R)-5,10-methylene-5,6,7,8-tetrahydrofolate + NADP(+) = (6R)-5,10-methenyltetrahydrofolate + NADPH. It catalyses the reaction (6R)-5,10-methenyltetrahydrofolate + H2O = (6R)-10-formyltetrahydrofolate + H(+). Its pathway is one-carbon metabolism; tetrahydrofolate interconversion. Its function is as follows. Catalyzes the oxidation of 5,10-methylenetetrahydrofolate to 5,10-methenyltetrahydrofolate and then the hydrolysis of 5,10-methenyltetrahydrofolate to 10-formyltetrahydrofolate. The polypeptide is Bifunctional protein FolD (Vibrio cholerae serotype O1 (strain ATCC 39541 / Classical Ogawa 395 / O395)).